A 337-amino-acid polypeptide reads, in one-letter code: S-adenosylmethionine:tRNA ribosyltransferase-isomerase (337 aa).

The protein belongs to the QueA family. In terms of assembly, monomer.

The protein localises to the cytoplasm. It carries out the reaction 7-aminomethyl-7-carbaguanosine(34) in tRNA + S-adenosyl-L-methionine = epoxyqueuosine(34) in tRNA + adenine + L-methionine + 2 H(+). It participates in tRNA modification; tRNA-queuosine biosynthesis. Its function is as follows. Transfers and isomerizes the ribose moiety from AdoMet to the 7-aminomethyl group of 7-deazaguanine (preQ1-tRNA) to give epoxyqueuosine (oQ-tRNA). The protein is S-adenosylmethionine:tRNA ribosyltransferase-isomerase of Legionella pneumophila (strain Corby).